Reading from the N-terminus, the 309-residue chain is Pseudouridine-5'-phosphate glycosidase 2 (309 aa).

Catalysis depends on glutamate 26, which acts as the Proton donor. Residues lysine 87 and valine 107 each coordinate substrate. Aspartate 139 contacts Mn(2+). 141-143 is a substrate binding site; it reads SAD. Lysine 160 acts as the Nucleophile in catalysis.

Belongs to the pseudouridine-5'-phosphate glycosidase family. In terms of assembly, homotrimer. Requires Mn(2+) as cofactor.

The enzyme catalyses D-ribose 5-phosphate + uracil = psi-UMP + H2O. Catalyzes the reversible cleavage of pseudouridine 5'-phosphate (PsiMP) to ribose 5-phosphate and uracil. Functions biologically in the cleavage direction, as part of a pseudouridine degradation pathway. This chain is Pseudouridine-5'-phosphate glycosidase 2, found in Rhizobium johnstonii (strain DSM 114642 / LMG 32736 / 3841) (Rhizobium leguminosarum bv. viciae).